A 790-amino-acid chain; its full sequence is SH3 domain-containing protein 19 (790 aa).

2 disordered regions span residues 21–196 and 241–374; these read EGQT…PVLQ and EPIK…MDLQ. Ser-65 carries the post-translational modification Phosphoserine. Over residues 287–296 the composition is skewed to polar residues; that stretch reads NTFSTVSGKL. Residues 336 to 351 are compositionally biased toward pro residues; sequence QQPPTKVPPERPPPPK. Residues 342 to 358 are interaction with SH3GL1; the sequence is VPPERPPPPKLSATRRS. Residues 365 to 374 are compositionally biased toward polar residues; it reads NRSSSDMDLQ. Ser-369 is subject to Phosphoserine. 5 SH3 domains span residues 415 to 477, 495 to 554, 571 to 630, 661 to 720, and 730 to 789; these read LSVP…PLDE, SGAP…VIID, VKGS…PVED, LPAE…PCPA, and PKGR…FLQI. Ser-762 carries the phosphoserine modification.

In terms of assembly, interacts with ADAM12. Isoform 4 and isoform 5 (but not isoform 1 and isoform 2) interact with ADAM9, ADAM10, ADAM15 and ADAM17. Interacts with SH3GL1 SH3 domain. Interacts via SH3 3 and SH3 4 or SH3 4 and SH3 5 domains with SOS2. Probably forms a trimeric complex with SH3GL1 and SOS2. Interacts with SH3YL1. In terms of tissue distribution, widely expressed with highest levels in heart, skeletal muscle, kidney, liver, placenta, small intestine and lung. Expressed at low levels in colon, thymus, spleen and leukocytes.

It localises to the cytoplasm. It is found in the nucleus. Its function is as follows. May play a role in regulating A disintegrin and metalloproteases (ADAMs) in the signaling of EGFR-ligand shedding. May be involved in suppression of Ras-induced cellular transformation and Ras-mediated activation of ELK1. Plays a role in the regulation of cell morphology and cytoskeletal organization. This is SH3 domain-containing protein 19 (SH3D19) from Homo sapiens (Human).